The primary structure comprises 65 residues: Large ribosomal subunit protein uL29 (65 aa).

The protein belongs to the universal ribosomal protein uL29 family.

The polypeptide is Large ribosomal subunit protein uL29 (Parabacteroides distasonis (strain ATCC 8503 / DSM 20701 / CIP 104284 / JCM 5825 / NCTC 11152)).